The following is a 379-amino-acid chain: Presenilin-associated rhomboid-like protein, mitochondrial (379 aa).

Residues Met1 to Gly52 constitute a mitochondrion transit peptide. Residues Phe53 to Pro101 lie on the Mitochondrial matrix side of the membrane. Position 65 is a phosphoserine (Ser65). Thr69 is modified (phosphothreonine). The residue at position 70 (Ser70) is a Phosphoserine. The helical transmembrane segment at Leu102–Tyr121 threads the bilayer. Residues Glu122–Arg167 are Mitochondrial intermembrane-facing. The helical transmembrane segment at Thr168–Ser187 threads the bilayer. Residues Leu188–Ser207 are Mitochondrial matrix-facing. Residues Pro208 to Trp230 form a helical membrane-spanning segment. Residues Ser231–Gln244 lie on the Mitochondrial intermembrane side of the membrane. The chain crosses the membrane as a helical span at residues Phe245–Val262. At Gly263–Pro272 the chain is on the mitochondrial matrix side. A helical membrane pass occupies residues Ser273 to Thr289. The active-site Nucleophile is the Ser277. The Mitochondrial intermembrane segment spans residues Lys290–Arg295. A helical transmembrane segment spans residues Leu296 to Met318. Residues Asp319–His332 lie on the Mitochondrial matrix side of the membrane. A helical membrane pass occupies residues Ala333–Trp354. Residue His335 is part of the active site. At Lys355–Lys379 the chain is on the mitochondrial intermembrane side.

The protein belongs to the peptidase S54 family. As to quaternary structure, interacts with PSEN1 and PSEN2. Binds OPA1. Post-translationally, P-beta is proteolytically processed (beta-cleavage) in a PARL-dependent manner. The cleavage is inhibited when residues Ser-65, Thr-69 and Ser-70 are all phosphorylated.

It localises to the mitochondrion inner membrane. Its subcellular location is the nucleus. It catalyses the reaction Cleaves type-1 transmembrane domains using a catalytic dyad composed of serine and histidine that are contributed by different transmembrane domains.. Required for the control of apoptosis during postnatal growth. Essential for proteolytic processing of an antiapoptotic form of OPA1 which prevents the release of mitochondrial cytochrome c in response to intrinsic apoptotic signals. Required for the maturation of PINK1 into its 52kDa mature form after its cleavage by mitochondrial-processing peptidase (MPP). Promotes cleavage of serine/threonine-protein phosphatase PGAM5 in damaged mitochondria in response to loss of mitochondrial membrane potential. Mediates differential cleavage of PINK1 and PGAM5 depending on the health status of mitochondria, disassociating from PINK1 and associating with PGAM5 in response to mitochondrial membrane potential loss. Required for processing of CLPB into a form with higher protein disaggregase activity by removing an autoinhibitory N-terminal peptide. Promotes processing of DIABLO/SMAC in the mitochondrion which is required for DIABLO apoptotic activity. Also required for cleavage of STARD7 and TTC19. Promotes changes in mitochondria morphology regulated by phosphorylation of P-beta domain. The chain is Presenilin-associated rhomboid-like protein, mitochondrial (PARL) from Homo sapiens (Human).